The primary structure comprises 886 residues: Alanine--tRNA ligase (886 aa).

H568, H572, C670, and H674 together coordinate Zn(2+).

It belongs to the class-II aminoacyl-tRNA synthetase family. Requires Zn(2+) as cofactor.

The protein localises to the cytoplasm. It carries out the reaction tRNA(Ala) + L-alanine + ATP = L-alanyl-tRNA(Ala) + AMP + diphosphate. Functionally, catalyzes the attachment of alanine to tRNA(Ala) in a two-step reaction: alanine is first activated by ATP to form Ala-AMP and then transferred to the acceptor end of tRNA(Ala). Also edits incorrectly charged Ser-tRNA(Ala) and Gly-tRNA(Ala) via its editing domain. The protein is Alanine--tRNA ligase of Prochlorococcus marinus (strain NATL1A).